A 40-amino-acid polypeptide reads, in one-letter code: Photosystem II reaction center protein J (40 aa).

Residues 8–28 (IPLWIIGTVTGIPVIGLIGIF) form a helical membrane-spanning segment.

It belongs to the PsbJ family. In terms of assembly, PSII is composed of 1 copy each of membrane proteins PsbA, PsbB, PsbC, PsbD, PsbE, PsbF, PsbH, PsbI, PsbJ, PsbK, PsbL, PsbM, PsbT, PsbX, PsbY, PsbZ, Psb30/Ycf12, at least 3 peripheral proteins of the oxygen-evolving complex and a large number of cofactors. It forms dimeric complexes.

The protein localises to the plastid. It is found in the chloroplast thylakoid membrane. One of the components of the core complex of photosystem II (PSII). PSII is a light-driven water:plastoquinone oxidoreductase that uses light energy to abstract electrons from H(2)O, generating O(2) and a proton gradient subsequently used for ATP formation. It consists of a core antenna complex that captures photons, and an electron transfer chain that converts photonic excitation into a charge separation. This chain is Photosystem II reaction center protein J, found in Citrus sinensis (Sweet orange).